A 346-amino-acid chain; its full sequence is Small ribosomal subunit biogenesis GTPase RsgA (346 aa).

Residues 98–261 (VQGGRGPQLA…VIDTPGMRTL (164 aa)) enclose the CP-type G domain. Residues 148 to 151 (TKAD) and 200 to 208 (GSSGVGKST) each bind GTP. Positions 284, 289, 291, and 297 each coordinate Zn(2+). A disordered region spans residues 317–346 (RKLSDENQHNTPVQSGPRGAKSPAGRGKRR).

The protein belongs to the TRAFAC class YlqF/YawG GTPase family. RsgA subfamily. As to quaternary structure, monomer. Associates with 30S ribosomal subunit, binds 16S rRNA. Zn(2+) serves as cofactor.

The protein resides in the cytoplasm. One of several proteins that assist in the late maturation steps of the functional core of the 30S ribosomal subunit. Helps release RbfA from mature subunits. May play a role in the assembly of ribosomal proteins into the subunit. Circularly permuted GTPase that catalyzes slow GTP hydrolysis, GTPase activity is stimulated by the 30S ribosomal subunit. This Mesorhizobium japonicum (strain LMG 29417 / CECT 9101 / MAFF 303099) (Mesorhizobium loti (strain MAFF 303099)) protein is Small ribosomal subunit biogenesis GTPase RsgA.